Consider the following 698-residue polypeptide: Probable xyloglucan glycosyltransferase 2 (698 aa).

Transmembrane regions (helical) follow at residues 124 to 144 (GFLALSLLALAVELAAYWNGW) and 190 to 210 (ILLFVIQSMDRLVLCLGCFWI). The active site involves D272. Substrate is bound by residues D331 and D333. Residue D425 is part of the active site. Helical transmembrane passes span 503–523 (LILPFYSFTLFCVILPLTMFV), 528–548 (LPVWVICYVPVCMSFLNILPS), 653–668 (LALSLLLLTAATRSLL), and 673–693 (IHFYFLLFQGVSFLFVGLDLI).

Belongs to the glycosyltransferase 2 family. Plant cellulose synthase-like C subfamily.

The protein localises to the golgi apparatus membrane. Probable beta-1,4-glucan synthase rather involved in the synthesis of the xyloglucan backbone than cellulose. Seems to work simultaneously with xyloglucan 6-xylosyltransferase. Xyloglucan is a noncellulosic polysaccharides of plant cell wall and consists of a glucan backbone substituted by xylose, galactose and fucose. The sequence is that of Probable xyloglucan glycosyltransferase 2 (CSLC2) from Oryza sativa subsp. japonica (Rice).